Here is a 261-residue protein sequence, read N- to C-terminus: Small ribosomal subunit protein uS2 (261 aa).

Belongs to the universal ribosomal protein uS2 family.

In Rhodospirillum centenum (strain ATCC 51521 / SW), this protein is Small ribosomal subunit protein uS2.